Here is a 302-residue protein sequence, read N- to C-terminus: UPF0761 membrane protein Tola_0461 (302 aa).

Helical transmembrane passes span 51–71, 111–131, 150–170, 188–208, 222–242, and 256–276; these read YVSLLSIVPLLAVVFSVLSWL, TTSIGLLMLVLLALLLIAAID, ITMYSIVLGVVPLLVGGSLLL, LGGGLLELLPYLLSLGGILLL, ALLGATLAALLFEVAKEGFGY, and ALAGIPILMIWLYMSWLVVLL.

The protein belongs to the UPF0761 family.

It localises to the cell inner membrane. The protein is UPF0761 membrane protein Tola_0461 of Tolumonas auensis (strain DSM 9187 / NBRC 110442 / TA 4).